The primary structure comprises 460 residues: MLKILIPTVMLIPTAWLAPTKWLWPTTLLHSLLIALASLSWLKNASETGWSSLNPYMATDPLSTPLLILSCWLLPLMILASQPNHTAHEPINRQRMYISLLTSLQFFLILAFSATEMIMFYVMFEVTLIPTLILITRWGNQTERLNAGTYFLFYTLAGSLPLLVALLLLQNSNGSLSLLTLLHSTPPQLSTYAAKIWWTGCILAFLVKMPLYGVHLWLPKAHVEAPIAGSMILAAVLLKLGGYGMMRILMTLEPLTKELSYPFIILALWGVIMTGSICMRQTDLKSLIAYSSVSHMGLVVGGILIQTPWGFTGALILMIAHGLTSSALFCLANTNYERTHSRTMLLARGLQMALPLMTAWWFIASLANLALPPLPNLMGELMIVTSLFNWSWWTIALTGLGMLITAGYSLYMFLMTQRGPLPSHIMALEPSHTREHLLIALHLLPLLLLILKPELIWGWS.

A run of 13 helical transmembrane segments spans residues 22 to 42 (WLWPTTLLHSLLIALASLSWL), 61 to 81 (PLSTPLLILSCWLLPLMILAS), 97 to 114 (YISLLTSLQFFLILAFSA), 118 to 140 (IMFYVMFEVTLIPTLILITRWGN), 149 to 169 (TYFLFYTLAGSLPLLVALLLL), 196 to 216 (IWWTGCILAFLVKMPLYGVHL), 226 to 246 (PIAGSMILAAVLLKLGGYGMM), 259 to 279 (LSYPFIILALWGVIMTGSICM), 286 to 305 (SLIAYSSVSHMGLVVGGILI), 309 to 331 (WGFTGALILMIAHGLTSSALFCL), 352 to 372 (MALPLMTAWWFIASLANLALP), 395 to 415 (IALTGLGMLITAGYSLYMFLM), and 437 to 457 (LLIALHLLPLLLLILKPELIW).

It belongs to the complex I subunit 4 family.

It localises to the mitochondrion membrane. It catalyses the reaction a ubiquinone + NADH + 5 H(+)(in) = a ubiquinol + NAD(+) + 4 H(+)(out). Functionally, core subunit of the mitochondrial membrane respiratory chain NADH dehydrogenase (Complex I) that is believed to belong to the minimal assembly required for catalysis. Complex I functions in the transfer of electrons from NADH to the respiratory chain. The immediate electron acceptor for the enzyme is believed to be ubiquinone. The sequence is that of NADH-ubiquinone oxidoreductase chain 4 (MT-ND4) from Tetraodon nigroviridis (Spotted green pufferfish).